The chain runs to 388 residues: Leucine aminopeptidase 1 (388 aa).

The first 19 residues, 1 to 19 (MRSSVLFSLYAATLVAAVA), serve as a signal peptide directing secretion. Residues 20–88 (HPKDPQIVLQ…TLNHKLSTES (69 aa)) constitute a propeptide that is removed on maturation. An N-linked (GlcNAc...) asparagine glycan is attached at asparagine 98. Zn(2+) is bound by residues histidine 187, aspartate 206, glutamate 245, and aspartate 272. The cysteines at positions 321 and 325 are disulfide-linked. Histidine 354 lines the Zn(2+) pocket.

This sequence belongs to the peptidase M28 family. M28E subfamily. In terms of assembly, monomer. Requires Zn(2+) as cofactor.

The protein resides in the secreted. Extracellular aminopeptidase that allows assimilation of proteinaceous substrates. The chain is Leucine aminopeptidase 1 (LAP1) from Leptosphaeria maculans (strain JN3 / isolate v23.1.3 / race Av1-4-5-6-7-8) (Blackleg fungus).